Consider the following 457-residue polypeptide: Siroheme synthase (457 aa).

A precorrin-2 dehydrogenase /sirohydrochlorin ferrochelatase region spans residues 1–204 (MDHLPIFCQL…NDQKAITETT (204 aa)). NAD(+) contacts are provided by residues 22–23 (DV) and 43–44 (LA). Ser-128 carries the phosphoserine modification. Residues 216–457 (GEVVLVGAGP…RDKLNWFSNH (242 aa)) are uroporphyrinogen-III C-methyltransferase. An S-adenosyl-L-methionine-binding site is contributed by Pro-225. Asp-248 acts as the Proton acceptor in catalysis. Residue Lys-270 is the Proton donor of the active site. S-adenosyl-L-methionine-binding positions include 301–303 (GGD), Ile-306, 331–332 (TA), Met-382, and Gly-411.

In the N-terminal section; belongs to the precorrin-2 dehydrogenase / sirohydrochlorin ferrochelatase family. This sequence in the C-terminal section; belongs to the precorrin methyltransferase family.

It catalyses the reaction uroporphyrinogen III + 2 S-adenosyl-L-methionine = precorrin-2 + 2 S-adenosyl-L-homocysteine + H(+). The enzyme catalyses precorrin-2 + NAD(+) = sirohydrochlorin + NADH + 2 H(+). It carries out the reaction siroheme + 2 H(+) = sirohydrochlorin + Fe(2+). It participates in cofactor biosynthesis; adenosylcobalamin biosynthesis; precorrin-2 from uroporphyrinogen III: step 1/1. It functions in the pathway cofactor biosynthesis; adenosylcobalamin biosynthesis; sirohydrochlorin from precorrin-2: step 1/1. Its pathway is porphyrin-containing compound metabolism; siroheme biosynthesis; precorrin-2 from uroporphyrinogen III: step 1/1. The protein operates within porphyrin-containing compound metabolism; siroheme biosynthesis; siroheme from sirohydrochlorin: step 1/1. It participates in porphyrin-containing compound metabolism; siroheme biosynthesis; sirohydrochlorin from precorrin-2: step 1/1. Multifunctional enzyme that catalyzes the SAM-dependent methylations of uroporphyrinogen III at position C-2 and C-7 to form precorrin-2 via precorrin-1. Then it catalyzes the NAD-dependent ring dehydrogenation of precorrin-2 to yield sirohydrochlorin. Finally, it catalyzes the ferrochelation of sirohydrochlorin to yield siroheme. This chain is Siroheme synthase, found in Escherichia fergusonii (strain ATCC 35469 / DSM 13698 / CCUG 18766 / IAM 14443 / JCM 21226 / LMG 7866 / NBRC 102419 / NCTC 12128 / CDC 0568-73).